The sequence spans 578 residues: Protein BONZAI 1 (578 aa).

Gly2 is lipidated: N-myristoyl glycine. 2 consecutive C2 domains span residues 26–163 (ALGA…TSTL) and 176–303 (QPHH…NFSL). Asp63, Asp69, Asp122, and Asp124 together coordinate Ca(2+). The 220-residue stretch at 341 to 560 (NFMVAIDFTA…SVVQALLAEL (220 aa)) folds into the VWFA domain.

Belongs to the copine family. As to quaternary structure, interacts (via VWA domain) with BAP1 and BAP2. Interacts with HSP70-1 and HSP70-2. It depends on Ca(2+) as a cofactor. Based on mass spectrometry analysis, the N-peptide must be modified and there might be additional modifications other than myristoylation. In terms of tissue distribution, expressed in roots and flowers and, at higher levels, in leaves and stems. Strongly expressed in growing tissues. Not detected in green siliques.

Its subcellular location is the cell membrane. Functionally, negative regulator of cell death and defense responses. Negative regulator of several R genes, including SNC1. May have effects in promoting growth and development. May function in membrane trafficking and in fusion of vesicles with plasma membrane at low temperature. Exhibits calcium-dependent phospholipid binding properties. The protein is Protein BONZAI 1 (BON1) of Arabidopsis thaliana (Mouse-ear cress).